We begin with the raw amino-acid sequence, 129 residues long: Large ribosomal subunit protein uL22 (129 aa).

The protein belongs to the universal ribosomal protein uL22 family. As to quaternary structure, part of the 50S ribosomal subunit.

This protein binds specifically to 23S rRNA; its binding is stimulated by other ribosomal proteins, e.g. L4, L17, and L20. It is important during the early stages of 50S assembly. It makes multiple contacts with different domains of the 23S rRNA in the assembled 50S subunit and ribosome. Functionally, the globular domain of the protein is located near the polypeptide exit tunnel on the outside of the subunit, while an extended beta-hairpin is found that lines the wall of the exit tunnel in the center of the 70S ribosome. This chain is Large ribosomal subunit protein uL22, found in Phytoplasma sp. (strain STRAWB2).